The following is a 963-amino-acid chain: Iron-responsive element-binding protein 2 (963 aa).

[4Fe-4S] cluster-binding residues include C512, C578, and C581.

It belongs to the aconitase/IPM isomerase family. Interacts with RBCK1 isoform 1 and isoform 2 only in iron-rich conditions. Interacts (when associated with the 4Fe-4S) with FBXL5. Interacts with CIAO1 and CIAO2A. The cofactor is [4Fe-4S] cluster. Post-translationally, ubiquitinated and degraded by the proteasome in presence of high level of iron and oxygen. Ubiquitinated by a SCF complex containing FBXL5. Upon iron and oxygen depletion FBXL5 is degraded, preventing ubiquitination and allowing its RNA-binding activity.

It localises to the cytoplasm. In terms of biological role, RNA-binding protein that binds to iron-responsive elements (IRES), which are stem-loop structures found in the 5'-UTR of ferritin, and delta aminolevulinic acid synthase mRNAs, and in the 3'-UTR of transferrin receptor mRNA. Binding to the IRE element in ferritin results in the repression of its mRNA translation. Binding of the protein to the transferrin receptor mRNA inhibits the degradation of this otherwise rapidly degraded mRNA. The chain is Iron-responsive element-binding protein 2 (IREB2) from Homo sapiens (Human).